A 119-amino-acid chain; its full sequence is Large ribosomal subunit protein uL24 (119 aa).

This sequence belongs to the universal ribosomal protein uL24 family. In terms of assembly, part of the 50S ribosomal subunit.

Its function is as follows. One of two assembly initiator proteins, it binds directly to the 5'-end of the 23S rRNA, where it nucleates assembly of the 50S subunit. Functionally, one of the proteins that surrounds the polypeptide exit tunnel on the outside of the subunit. The protein is Large ribosomal subunit protein uL24 of Leifsonia xyli subsp. xyli (strain CTCB07).